The primary structure comprises 225 residues: Protein-L-isoaspartate O-methyltransferase (225 aa).

S75 is a catalytic residue.

This sequence belongs to the methyltransferase superfamily. L-isoaspartyl/D-aspartyl protein methyltransferase family.

The protein localises to the cytoplasm. It carries out the reaction [protein]-L-isoaspartate + S-adenosyl-L-methionine = [protein]-L-isoaspartate alpha-methyl ester + S-adenosyl-L-homocysteine. Its function is as follows. Catalyzes the methyl esterification of L-isoaspartyl residues in peptides and proteins that result from spontaneous decomposition of normal L-aspartyl and L-asparaginyl residues. It plays a role in the repair and/or degradation of damaged proteins. This chain is Protein-L-isoaspartate O-methyltransferase, found in Xanthomonas euvesicatoria pv. vesicatoria (strain 85-10) (Xanthomonas campestris pv. vesicatoria).